We begin with the raw amino-acid sequence, 474 residues long: Bifunctional protein HldE (474 aa).

The tract at residues 1–318 (MKLSMPRFDQ…RAIQREEGSE (318 aa)) is ribokinase. 194-197 (NLSE) is a binding site for ATP. Asp-263 is a catalytic residue. The cytidylyltransferase stretch occupies residues 343-474 (FTNGCFDILH…AIVEKIRGQG (132 aa)).

It in the N-terminal section; belongs to the carbohydrate kinase PfkB family. The protein in the C-terminal section; belongs to the cytidylyltransferase family. In terms of assembly, homodimer.

It catalyses the reaction D-glycero-beta-D-manno-heptose 7-phosphate + ATP = D-glycero-beta-D-manno-heptose 1,7-bisphosphate + ADP + H(+). The catalysed reaction is D-glycero-beta-D-manno-heptose 1-phosphate + ATP + H(+) = ADP-D-glycero-beta-D-manno-heptose + diphosphate. The protein operates within nucleotide-sugar biosynthesis; ADP-L-glycero-beta-D-manno-heptose biosynthesis; ADP-L-glycero-beta-D-manno-heptose from D-glycero-beta-D-manno-heptose 7-phosphate: step 1/4. It functions in the pathway nucleotide-sugar biosynthesis; ADP-L-glycero-beta-D-manno-heptose biosynthesis; ADP-L-glycero-beta-D-manno-heptose from D-glycero-beta-D-manno-heptose 7-phosphate: step 3/4. Its function is as follows. Catalyzes the phosphorylation of D-glycero-D-manno-heptose 7-phosphate at the C-1 position to selectively form D-glycero-beta-D-manno-heptose-1,7-bisphosphate. Catalyzes the ADP transfer from ATP to D-glycero-beta-D-manno-heptose 1-phosphate, yielding ADP-D-glycero-beta-D-manno-heptose. The chain is Bifunctional protein HldE from Pseudomonas syringae pv. syringae (strain B728a).